Consider the following 397-residue polypeptide: Phosphoglycerate kinase (397 aa).

Residues 21-23, Arg-36, 59-62, Arg-119, and Arg-152 each bind substrate; these read DVN and HFGR. Residues Lys-202, Glu-324, and 354–357 contribute to the ATP site; that span reads GGDT.

It belongs to the phosphoglycerate kinase family. As to quaternary structure, monomer.

It is found in the cytoplasm. It carries out the reaction (2R)-3-phosphoglycerate + ATP = (2R)-3-phospho-glyceroyl phosphate + ADP. The protein operates within carbohydrate degradation; glycolysis; pyruvate from D-glyceraldehyde 3-phosphate: step 2/5. The protein is Phosphoglycerate kinase of Cereibacter sphaeroides (strain ATCC 17029 / ATH 2.4.9) (Rhodobacter sphaeroides).